Reading from the N-terminus, the 457-residue chain is Acetylcholine receptor subunit alpha-1-A (457 aa).

Positions 1-20 (MDFVLTRLILLFLAATIIYS) are cleaved as a signal peptide. The Extracellular segment spans residues 21-230 (SEDESRLIND…ITYHFLLQRL (210 aa)). 2 cysteine pairs are disulfide-bonded: C148/C162 and C212/C213. An N-linked (GlcNAc...) asparagine glycan is attached at N161. A run of 3 helical transmembrane segments spans residues 231 to 255 (PLYFIVNVVIPCLLFSFLTGLVFYL), 263 to 281 (ITLSVSVLLSLVVFLLVIV), and 297 to 316 (YMLFTMVFVIASIVITVIVI). The Cytoplasmic portion of the chain corresponds to 317–428 (NTHHRSPSTH…WKFVAMVLDH (112 aa)). A helical membrane pass occupies residues 429–447 (LLLAVFMIVCIIGTLAIFA).

This sequence belongs to the ligand-gated ion channel (TC 1.A.9) family. Acetylcholine receptor (TC 1.A.9.1) subfamily. Alpha-1/CHRNA1 sub-subfamily. As to quaternary structure, one of the alpha chains that assemble within the acetylcholine receptor, a pentamer of two alpha chains, a beta, a delta, and a gamma or epsilon chains. As to expression, oocytes.

It localises to the postsynaptic cell membrane. The protein localises to the cell membrane. The enzyme catalyses K(+)(in) = K(+)(out). It carries out the reaction Na(+)(in) = Na(+)(out). Upon acetylcholine binding, the AChR responds by an extensive change in conformation that affects all subunits and leads to opening of an ion-conducting channel across the plasma membrane. The protein is Acetylcholine receptor subunit alpha-1-A (chrna1-a) of Xenopus laevis (African clawed frog).